Here is a 1103-residue protein sequence, read N- to C-terminus: Kinesin-like protein KIF1C (1103 aa).

Residues 5-348 (SVKVAVRVRP…LRYADRTKQI (344 aa)) form the Kinesin motor domain. 97-104 (GQTGAGKS) contributes to the ATP binding site. At serine 295 the chain carries Phosphoserine. Coiled coils occupy residues 359 to 388 (NARL…SALE) and 438 to 479 (EEAM…LAEM). Residues 400–438 (ALPAVSSPPAPVSPSSPTTHNGELEPSFSPNTESQIGPE) form a disordered region. Serine 494 is modified (phosphoserine). An FHA domain is found at 523 to 590 (TRVGQVDMDI…LKSGNRIVMG (68 aa)). Residues 633–674 (EQQGIDIKLEMEKRLQDLENQYRKEKEEADLLLEQQRLYADS) are a coiled coil. A phosphoserine mark is found at serine 674 and serine 676. Disordered regions lie at residues 808 to 828 (GEEE…ARGA), 874 to 924 (LAQD…WERV), and 950 to 1103 (QGLQ…GAAV). Residues 813 to 822 (GGAGSGGGSE) are compositionally biased toward gly residues. Residues 828–872 (AEVEDLRAHIDKLTGILQEVKLQNSSKDRELQALRDRMLRMERVI) adopt a coiled-coil conformation. Residues 893–910 (PEGSEAAEEAAPSDRMPS) are compositionally biased toward low complexity. At serine 915 the chain carries Phosphoserine. The segment covering 953–962 (QGSGGRGGGL) has biased composition (gly residues). The segment covering 1021–1031 (PSPRRSHHPRR) has biased composition (basic residues). Phosphoserine is present on serine 1033. Arginine 1041 bears the Omega-N-methylarginine mark. A compositionally biased stretch (pro residues) spans 1062-1083 (PQPPQPYPAQRPPGPRYPPYTT). A Phosphothreonine modification is found at threonine 1083. Position 1092 is a phosphoserine (serine 1092). Residues 1092–1103 (SAPDLKESGAAV) show a composition bias toward basic and acidic residues.

Belongs to the TRAFAC class myosin-kinesin ATPase superfamily. Kinesin family. Unc-104 subfamily. Monomer. Interacts with BICD2. Post-translationally, phosphorylated on tyrosine residues. As to expression, expressed in all tissues examined, with most abundant expression in heart and skeletal muscle.

Its subcellular location is the cytoplasm. It localises to the cytoskeleton. Functionally, motor required for the retrograde transport of Golgi vesicles to the endoplasmic reticulum. Has a microtubule plus end-directed motility. The chain is Kinesin-like protein KIF1C (KIF1C) from Homo sapiens (Human).